Consider the following 283-residue polypeptide: HTH-type transcriptional activator RhaR (283 aa).

Residues Asp-179–Gln-277 enclose the HTH araC/xylS-type domain. 2 DNA-binding regions (H-T-H motif) span residues Gln-196–Thr-217 and Ile-244–Thr-267.

In terms of assembly, binds DNA as a dimer.

It is found in the cytoplasm. In terms of biological role, activates expression of the rhaSR operon in response to L-rhamnose. The chain is HTH-type transcriptional activator RhaR from Cronobacter sakazakii (strain ATCC BAA-894) (Enterobacter sakazakii).